The chain runs to 344 residues: Proline-rich transmembrane protein 2 (344 aa).

2 disordered regions span residues Met-1–Pro-220 and Gly-233–Gly-265. Residues Met-1–Tyr-272 lie on the Cytoplasmic side of the membrane. Residue Ser-28 is modified to Phosphoserine. Positions Pro-69–Val-82 are enriched in low complexity. Residues Thr-74 and Thr-78 each carry the phosphothreonine modification. Polar residues predominate over residues Ala-124 to Asn-143. The span at Thr-151–Ala-162 shows a compositional bias: pro residues. Residues Glu-168–Ser-178 show a composition bias toward polar residues. Over residues Ala-201–Lys-211 the composition is skewed to pro residues. Ser-242 carries the phosphoserine modification. Position 244 is an omega-N-methylarginine (Arg-244). A phosphoserine mark is found at Ser-252 and Ser-253. An intramembrane region (helical) is located at residues Ile-273–Ala-293. Over Tyr-294–Ser-321 the chain is Cytoplasmic. A helical membrane pass occupies residues Ile-322–Val-342. Residues Tyr-343–Lys-344 are Extracellular-facing.

This sequence belongs to the CD225/Dispanin family. Component of the outer core of AMPAR complex. AMPAR complex consists of an inner core made of 4 pore-forming GluA/GRIA proteins (GRIA1, GRIA2, GRIA3 and GRIA4) and 4 major auxiliary subunits arranged in a twofold symmetry. One of the two pairs of distinct binding sites is occupied either by CNIH2, CNIH3 or CACNG2, CACNG3. The other harbors CACNG2, CACNG3, CACNG4, CACNG8 or GSG1L. This inner core of AMPAR complex is complemented by outer core constituents binding directly to the GluA/GRIA proteins at sites distinct from the interaction sites of the inner core constituents. Outer core constituents include at least PRRT1, PRRT2, CKAMP44/SHISA9, FRRS1L and NRN1. The proteins of the inner and outer core serve as a platform for other, more peripherally associated AMPAR constituents. Alone or in combination, these auxiliary subunits control the gating and pharmacology of the AMPAR complex and profoundly impact their biogenesis and protein processing. Interacts with intersectin 1/ITSN1. Interacts with SNARE complex components, including SNAP25, STX1A, SYT1 and SYT2; this interaction may inhibit SNARE complex formation. In terms of tissue distribution, neuron-specific expression throughout the brain, including hippocampus (at protein level).

The protein resides in the cell membrane. It is found in the presynaptic cell membrane. Its subcellular location is the synapse. The protein localises to the cell projection. It localises to the axon. The protein resides in the cytoplasmic vesicle. It is found in the secretory vesicle. Its subcellular location is the synaptic vesicle membrane. The protein localises to the postsynaptic density membrane. It localises to the dendritic spine. As a component of the outer core of AMPAR complex, may be involved in synaptic transmission in the central nervous system. In hippocampal neurons, in presynaptic terminals, plays an important role in the final steps of neurotransmitter release, possibly by regulating Ca(2+)-sensing. In the cerebellum, may inhibit SNARE complex formation and down-regulate short-term facilitation. In Rattus norvegicus (Rat), this protein is Proline-rich transmembrane protein 2 (Prrt2).